A 336-amino-acid polypeptide reads, in one-letter code: Neuropeptides B/W receptor type 2 (336 aa).

A disordered region spans residues 1 to 25; that stretch reads MMEATGLEGLESTSSPCPGSTGTGL. Residues 1–45 are Extracellular-facing; that stretch reads MMEATGLEGLESTSSPCPGSTGTGLSWDNGTRHNATFPEPLPALY. Residues 12–25 show a composition bias toward low complexity; that stretch reads STSSPCPGSTGTGL. 2 N-linked (GlcNAc...) asparagine glycosylation sites follow: asparagine 29 and asparagine 34. Residues 46 to 68 traverse the membrane as a helical segment; it reads VLLPVVYSVICAVGLVGNAAVIC. The Cytoplasmic segment spans residues 69–80; the sequence is VILRAPKMKTVT. The chain crosses the membrane as a helical span at residues 81-103; the sequence is HVFILNLAIADGLFTLVLPTNIA. Residues 104 to 127 are Extracellular-facing; the sequence is EHLLQRWPFGEVLCKLVLAIDHCN. A disulfide bridge links cysteine 117 with cysteine 197. A helical transmembrane segment spans residues 128 to 146; sequence IFSSVYFLAAMSIDRYLVV. Residues 147–165 lie on the Cytoplasmic side of the membrane; it reads LATARSRRMPRRTVHRAKV. A helical membrane pass occupies residues 166–188; sequence ASLCVWLGVTVAVLPFLTFAGVY. Topologically, residues 189–213 are extracellular; the sequence is NNELQVTSCGLSFPRPERAWFQASR. Residues 214-236 form a helical membrane-spanning segment; sequence IYTLVLGFVVPMCTLCVLYADLL. Residues 237-256 are Cytoplasmic-facing; the sequence is RRLRALRLHSGAKALGKAKR. A helical transmembrane segment spans residues 257–279; it reads KVSLLVLAVLAVGLLCWTPFHLA. The Extracellular segment spans residues 280-293; it reads SIVALTTDLPQTPL. A helical transmembrane segment spans residues 294 to 316; sequence VIIVSYVVTSLSYTSSCLNPFLY. Residues 317–336 are Cytoplasmic-facing; sequence AFLDHSFRKSLRTACRCQGA.

The protein belongs to the G-protein coupled receptor 1 family.

Its subcellular location is the cell membrane. Its function is as follows. Interacts specifically with a number of opioid ligands. Receptor for neuropeptides B and W, which may be involved in neuroendocrine system regulation, food intake and the organization of other signals. This Bos taurus (Bovine) protein is Neuropeptides B/W receptor type 2 (NPBWR2).